The following is a 734-amino-acid chain: Sulfate transporter (734 aa).

Residues 1-11 (MSLKNGEQNDL) are compositionally biased toward polar residues. The tract at residues 1–38 (MSLKNGEQNDLSPKDSVKGNDQYRSPSGIHVEHEEESR) is disordered. A phosphoserine mark is found at S12 and S16. 2 helical membrane passes run 113–133 (MMSG…YSLL) and 138–158 (PIYG…LGTS). N-linked (GlcNAc...) asparagine glycosylation is found at N194 and N204. 8 helical membrane passes run 222-242 (FVAG…VSVY), 247-267 (LLGG…VKYL), 269-289 (GLSL…IHIF), 292-312 (IHKT…VLLP), 379-399 (VDAI…SEMF), 415-435 (AIGF…SAAL), 453-473 (VMTA…FFSL), and 519-539 (LIST…CVIL). The STAS domain occupies 563-714 (AYKNLQAKSG…YSVYEAMTFA (152 aa)).

The protein belongs to the SLC26A/SulP transporter (TC 2.A.53) family. N-glycosylated.

The protein localises to the cell membrane. It is found in the apical cell membrane. The enzyme catalyses oxalate(in) + sulfate(out) = oxalate(out) + sulfate(in). It carries out the reaction sulfate(out) + 2 chloride(in) = sulfate(in) + 2 chloride(out). It catalyses the reaction oxalate(out) + 2 chloride(in) = oxalate(in) + 2 chloride(out). The catalysed reaction is bromide(in) + chloride(out) = bromide(out) + chloride(in). The enzyme catalyses nitrate(in) + chloride(out) = nitrate(out) + chloride(in). It carries out the reaction iodide(in) + chloride(out) = iodide(out) + chloride(in). In terms of biological role, sulfate transporter which mediates sulfate uptake into chondrocytes in order to maintain adequate sulfation of proteoglycans which is needed for cartilage development. Mediates electroneutral anion exchange of sulfate ions for oxalate ions, sulfate and oxalate ions for chloride and/or hydroxyl ions and chloride ions for bromide, iodide and nitrate ions. The coupling of sulfate transport to both hydroxyl and chloride ions likely serves to ensure transport at both acidic pH when most sulfate uptake is mediated by sulfate-hydroxide exchange and alkaline pH when most sulfate uptake is mediated by sulfate-chloride exchange. Essential for chondrocyte proliferation, differentiation and cell size expansion. The chain is Sulfate transporter (SLC26A2) from Ovis aries (Sheep).